Consider the following 22-residue polypeptide: Caerin-3.3 (22 aa).

At Lys-22 the chain carries Lysine amide.

In terms of tissue distribution, expressed by the skin parotoid and/or rostral glands.

The protein resides in the secreted. Its function is as follows. Antibacterial peptide, that adopts an alpha helical conformation which can disrupt bacterial membranes. Each caerin displays a different antimicrobial specificity. This is Caerin-3.3 from Ranoidea caerulea (Green tree frog).